Reading from the N-terminus, the 125-residue chain is Cu-Zn superoxide dismutase-like protein (125 aa).

Residues cysteine 52 and cysteine 102 are joined by a disulfide bond.

The protein belongs to the Cu-Zn superoxide dismutase family.

The protein localises to the host cytoplasm. Virion protein with no enzymatic activity. The polypeptide is Cu-Zn superoxide dismutase-like protein (Bos taurus (Bovine)).